The following is a 365-amino-acid chain: UDP-galactose transporter homolog 1 (365 aa).

2 helical membrane passes run 42–62 (IIDLIICVSGIYASFLTWAVL) and 80–100 (ASLVINTVQSFLAAAVGYAYL). The N-linked (GlcNAc...) asparagine glycan is linked to asparagine 115. The next 2 membrane-spanning stretches (helical) occupy residues 182 to 202 (YAVVVLVTIGVSMFTIFHAAP) and 206 to 226 (SGAGSEHQLYGLGLLGISMLL). Residue asparagine 231 is glycosylated (N-linked (GlcNAc...) asparagine). Transmembrane regions (helical) follow at residues 249-269 (VMCGLNLLTGVFTTVSLLTFS), 289-309 (DIVLFGLCGAVGQVFIFQTLE), 315-335 (VLVTVNVTRKMFSMLLSVVWF), and 339-359 (LTLGQWAGVAAVFGGIGFEAW).

Belongs to the nucleotide-sugar transporter family. SLC35B subfamily.

Its subcellular location is the endoplasmic reticulum membrane. In terms of biological role, may be involved in specific transport of UDP-Gal from the cytosol to the Golgi lumen. Involved in the maintenance of optimal conditions for the folding of secretory pathway proteins in the endoplasmic reticulum. The polypeptide is UDP-galactose transporter homolog 1 (HUT1) (Yarrowia lipolytica (strain CLIB 122 / E 150) (Yeast)).